Reading from the N-terminus, the 916-residue chain is Nitrate reductase [NADH] 1 (916 aa).

Residues 1–77 (MAASVQPRQF…DDEEEEQEDW (77 aa)) form a disordered region. The segment covering 66–76 (GSDDEEEEQED) has biased composition (acidic residues). Cys-192 is a Mo-molybdopterin binding site. Residues 541–616 (GKQFTMSEVR…LDTYRIGELI (76 aa)) form the Cytochrome b5 heme-binding domain. His-576 and His-599 together coordinate heme. The FAD-binding FR-type domain occupies 656-768 (RDKVPCQLVD…KGPLGHVEYT (113 aa)). Residues 708–711 (RAYT), 725–729 (LIKVY), Phe-730, Phe-737, 742–744 (LMT), Ser-792, and Thr-795 contribute to the FAD site.

This sequence belongs to the nitrate reductase family. As to quaternary structure, homodimer. Requires FAD as cofactor. It depends on heme as a cofactor. Mo-molybdopterin serves as cofactor.

It carries out the reaction nitrite + NAD(+) + H2O = nitrate + NADH + H(+). Functionally, nitrate reductase is a key enzyme involved in the first step of nitrate assimilation in plants, fungi and bacteria. This is Nitrate reductase [NADH] 1 (NIA1) from Oryza sativa subsp. japonica (Rice).